The following is a 102-amino-acid chain: Gastrin/cholecystokinin-like peptide (102 aa).

A signal peptide spans 1–20 (MDKKVCVSILLAMLAIAALC). The propeptide occupies 21-45 (RPMTELESARHGAQRKNSISDVSRR). Sulfotyrosine is present on Tyr86. Phe92 bears the Phenylalanine amide mark. The propeptide occupies 96–102 (SSEVTES).

Belongs to the gastrin/cholecystokinin family. Expressed in antrum, duodenum, colon, pancreas, brain and testis. No expression found in kidney, lung, liver, skin or distal two-thirds of small intestine. In the brain, strongly expressed in the pituitary gland with moderate expression in the neural lobe, brain stem and hypothalamus.

Its subcellular location is the secreted. Its function is as follows. May control digestion processes. The chain is Gastrin/cholecystokinin-like peptide (GAST) from Aquarana catesbeiana (American bullfrog).